The following is a 366-amino-acid chain: DNA polymerase IV (366 aa).

The UmuC domain maps to isoleucine 6–glycine 197. Residues aspartate 10 and aspartate 114 each coordinate Mg(2+). Residue glutamate 115 is part of the active site.

This sequence belongs to the DNA polymerase type-Y family. Monomer. The cofactor is Mg(2+).

It is found in the cytoplasm. It catalyses the reaction DNA(n) + a 2'-deoxyribonucleoside 5'-triphosphate = DNA(n+1) + diphosphate. Functionally, poorly processive, error-prone DNA polymerase involved in untargeted mutagenesis. Copies undamaged DNA at stalled replication forks, which arise in vivo from mismatched or misaligned primer ends. These misaligned primers can be extended by PolIV. Exhibits no 3'-5' exonuclease (proofreading) activity. May be involved in translesional synthesis. The protein is DNA polymerase IV of Methanosarcina acetivorans (strain ATCC 35395 / DSM 2834 / JCM 12185 / C2A).